A 182-amino-acid polypeptide reads, in one-letter code: Putative manganese efflux pump MntP (182 aa).

6 helical membrane passes run 6–26 (LIPL…VSLG), 37–57 (ILYI…IGMV), 71–91 (HFAG…STIL), 101–121 (IGIS…SVGL), 131–151 (IITI…GLLI), and 162–182 (YGEI…LFPI).

Belongs to the MntP (TC 9.B.29) family.

The protein resides in the cell membrane. Its function is as follows. Probably functions as a manganese efflux pump. The sequence is that of Putative manganese efflux pump MntP from Bacillus cereus (strain G9842).